Reading from the N-terminus, the 458-residue chain is Cysteine--tRNA ligase (458 aa).

C28 provides a ligand contact to Zn(2+). Residues 30-40 (VTVYDLCHFGH) carry the 'HIGH' region motif. Residues C209, H234, and E238 each contribute to the Zn(2+) site. Residues 266–270 (KMSKS) carry the 'KMSKS' region motif. K269 is a binding site for ATP.

This sequence belongs to the class-I aminoacyl-tRNA synthetase family. In terms of assembly, monomer. Zn(2+) is required as a cofactor.

The protein resides in the cytoplasm. It carries out the reaction tRNA(Cys) + L-cysteine + ATP = L-cysteinyl-tRNA(Cys) + AMP + diphosphate. The chain is Cysteine--tRNA ligase from Mannheimia succiniciproducens (strain KCTC 0769BP / MBEL55E).